A 256-amino-acid chain; its full sequence is Protein FixA (256 aa).

It belongs to the ETF beta-subunit/FixA family. In terms of assembly, heterodimer of FixA and FixB.

The protein operates within amine and polyamine metabolism; carnitine metabolism. Functionally, required for anaerobic carnitine reduction. May bring reductant to CaiA. The sequence is that of Protein FixA from Shigella flexneri serotype 5b (strain 8401).